The sequence spans 368 residues: DNA replication and repair protein RecF (368 aa).

30–37 (GKNGSGKT) provides a ligand contact to ATP.

Belongs to the RecF family.

The protein resides in the cytoplasm. In terms of biological role, the RecF protein is involved in DNA metabolism; it is required for DNA replication and normal SOS inducibility. RecF binds preferentially to single-stranded, linear DNA. It also seems to bind ATP. In Marinomonas sp. (strain MWYL1), this protein is DNA replication and repair protein RecF.